The chain runs to 194 residues: Peptidyl-tRNA hydrolase (194 aa).

Position 17 (Y17) interacts with tRNA. The active-site Proton acceptor is H22. The tRNA site is built by Y68, N70, and N116.

This sequence belongs to the PTH family. In terms of assembly, monomer.

The protein resides in the cytoplasm. The enzyme catalyses an N-acyl-L-alpha-aminoacyl-tRNA + H2O = an N-acyl-L-amino acid + a tRNA + H(+). Its function is as follows. Hydrolyzes ribosome-free peptidyl-tRNAs (with 1 or more amino acids incorporated), which drop off the ribosome during protein synthesis, or as a result of ribosome stalling. In terms of biological role, catalyzes the release of premature peptidyl moieties from peptidyl-tRNA molecules trapped in stalled 50S ribosomal subunits, and thus maintains levels of free tRNAs and 50S ribosomes. The protein is Peptidyl-tRNA hydrolase of Pseudomonas aeruginosa (strain LESB58).